Here is a 299-residue protein sequence, read N- to C-terminus: 33 kDa chaperonin (299 aa).

2 cysteine pairs are disulfide-bonded: cysteine 239/cysteine 241 and cysteine 272/cysteine 275.

Belongs to the HSP33 family. Under oxidizing conditions two disulfide bonds are formed involving the reactive cysteines. Under reducing conditions zinc is bound to the reactive cysteines and the protein is inactive.

It is found in the cytoplasm. Functionally, redox regulated molecular chaperone. Protects both thermally unfolding and oxidatively damaged proteins from irreversible aggregation. Plays an important role in the bacterial defense system toward oxidative stress. The sequence is that of 33 kDa chaperonin from Acaryochloris marina (strain MBIC 11017).